The following is a 371-amino-acid chain: MSTAERAPILLTPGPLTTSYRTRRAMMVDWGSWDSDFNELTASVCQRLLKIVGGEGSHTCVPLQGSGTFAVEAAIGTLVPRDGKVLVLINGAYGKRLAKICEVLQRPFSTFETEENVPTTAADVERLLAADPAISHVALIHCETSTGILNPLEAIAKVVERHGKRLIVDAMSSFGAIGIDARKVPFDALIAASGKCLEGVPGMGFVFARSAALEASAGNCHSLAMDLQDQHAYMRKTGQWRFTPPTHVVAALHEALSQYEEEGGLPARQRRYASNCETLLGEMARLGFRSFLPAEIQAPIIVTFHAPRDPRYRFADFYQRVREKGFILYPGKLTQVETFRVGCIGHVDAAEMRQAVAAIGEALRELEVLEI.

Residue K195 is modified to N6-(pyridoxal phosphate)lysine.

Belongs to the class-V pyridoxal-phosphate-dependent aminotransferase family. PhnW subfamily. In terms of assembly, homodimer. The cofactor is pyridoxal 5'-phosphate.

It carries out the reaction (2-aminoethyl)phosphonate + pyruvate = phosphonoacetaldehyde + L-alanine. Involved in phosphonate degradation. This Pseudomonas aeruginosa (strain UCBPP-PA14) protein is 2-aminoethylphosphonate--pyruvate transaminase.